The sequence spans 161 residues: Type-1 angiotensin II receptor-associated protein (161 aa).

Residues Met-1 to Phe-26 lie on the Extracellular side of the membrane. A helical transmembrane segment spans residues Ser-27–Gln-47. Residues Arg-48–Ala-53 are Cytoplasmic-facing. The chain crosses the membrane as a helical span at residues Ile-54–Ile-74. The Extracellular portion of the chain corresponds to Phe-75–Arg-86. Residues Phe-87–Tyr-107 form a helical membrane-spanning segment. Residues His-108–Tyr-161 lie on the Cytoplasmic side of the membrane. The segment at His-110–Asp-122 is interaction with AGTR1. Ser-127 is subject to Phosphoserine. The residue at position 135 (Thr-135) is a Phosphothreonine. Ser-138 is modified (phosphoserine).

As to quaternary structure, interacts with RACK1, and with the C-terminal region of AGTR1. As to expression, ubiquitous but more abundant in kidney, testis and heart.

It localises to the endoplasmic reticulum membrane. The protein localises to the golgi apparatus membrane. Its subcellular location is the cytoplasmic vesicle membrane. Appears to be a negative regulator of type-1 angiotensin II receptor-mediated signaling by regulating receptor internalization as well as mechanism of receptor desensitization such as phosphorylation. Also induces a decrease in angiotensin II-stimulated transcriptional activity. May play a role of negative regulator in cardiomyocyte hypertrophy induced by angiotensin II through an inhibition of p38 mitogen-activated protein kinase pathway. The polypeptide is Type-1 angiotensin II receptor-associated protein (Agtrap) (Mus musculus (Mouse)).